A 254-amino-acid polypeptide reads, in one-letter code: 4-hydroxy-tetrahydrodipicolinate reductase (254 aa).

Residues 10–15 (GATGKV) and 101–103 (GTT) contribute to the NAD(+) site. Histidine 157 (proton donor/acceptor) is an active-site residue. Residue histidine 158 coordinates (S)-2,3,4,5-tetrahydrodipicolinate. Lysine 161 (proton donor) is an active-site residue. A (S)-2,3,4,5-tetrahydrodipicolinate-binding site is contributed by 167-168 (GT).

The protein belongs to the DapB family.

It is found in the cytoplasm. The enzyme catalyses (S)-2,3,4,5-tetrahydrodipicolinate + NAD(+) + H2O = (2S,4S)-4-hydroxy-2,3,4,5-tetrahydrodipicolinate + NADH + H(+). It carries out the reaction (S)-2,3,4,5-tetrahydrodipicolinate + NADP(+) + H2O = (2S,4S)-4-hydroxy-2,3,4,5-tetrahydrodipicolinate + NADPH + H(+). Its pathway is amino-acid biosynthesis; L-lysine biosynthesis via DAP pathway; (S)-tetrahydrodipicolinate from L-aspartate: step 4/4. Its function is as follows. Catalyzes the conversion of 4-hydroxy-tetrahydrodipicolinate (HTPA) to tetrahydrodipicolinate. The sequence is that of 4-hydroxy-tetrahydrodipicolinate reductase from Symbiobacterium thermophilum (strain DSM 24528 / JCM 14929 / IAM 14863 / T).